The primary structure comprises 76 residues: Alpha/kappa-conotoxin-like pl14.3 (76 aa).

The first 27 residues, 1-27 (MPSVRSVACCCLLWMMLSVQLVTPGSP), serve as a signal peptide directing secretion. A propeptide spanning residues 28–39 (ATAQLSGQRTAR) is cleaved from the precursor. 2 disulfide bridges follow: Cys46–Cys61 and Cys50–Cys63. Position 64 is an aspartic acid 1-amide (Asp64). Residues 65-76 (GKRDVVSSSMAV) constitute a propeptide that is removed on maturation.

Belongs to the conotoxin J superfamily. Expressed by the venom duct.

Its subcellular location is the secreted. Functionally, highly inhibits both nicotinic acetylcholine receptors (neuronal (alpha-3/beta-4) and muscular (alpha-1/beta-1/epsilon/delta) subtypes) and the voltage-gated potassium channel Kv1.6/KCNA6 subtype. This Conus planorbis (Planorbis cone) protein is Alpha/kappa-conotoxin-like pl14.3.